We begin with the raw amino-acid sequence, 422 residues long: La-related protein 6A (422 aa).

Residues 1-94 (MSSLPLRSGE…DHGENPVETD (94 aa)) are disordered. A compositionally biased stretch (low complexity) spans 48 to 61 (VTESSDDVVVNVSE). The span at 73 to 89 (DHERNSGEDRDQDHGEN) shows a compositional bias: basic and acidic residues. The HTH La-type RNA-binding domain occupies 97-188 (VVPIDELNQK…KRLSPLPEIR (92 aa)). One can recognise an RRM domain in the interval 193–283 (FTVLVENLPE…NGLRVKLLEQ (91 aa)). The disordered stretch occupies residues 286 to 422 (GKFAQRRPAR…PTSTQTSHEV (137 aa)). A compositionally biased stretch (basic and acidic residues) spans 295–348 (RREVDKEKDTTGRVHDQTGGEKNKKTREHQNHRLHHSDNPADDDGGNHQKDKNG).

Its subcellular location is the nucleus. Functionally, transcriptional regulator. The sequence is that of La-related protein 6A (LARP6A) from Arabidopsis thaliana (Mouse-ear cress).